We begin with the raw amino-acid sequence, 55 residues long: MISEIQILIDYNASSLFILCSKLERILSKKQNVRSKAVDNSSLSVVFQNESIIKS.

This is an uncharacterized protein from Rickettsia prowazekii (strain Madrid E).